The following is a 349-amino-acid chain: Anthranilate phosphoribosyltransferase (349 aa).

5-phospho-alpha-D-ribose 1-diphosphate is bound by residues Gly82, 85 to 86 (GD), 92 to 95 (NVST), 110 to 118 (KHGNRGVSS), and Ser122. Gly82 contacts anthranilate. Ser94 provides a ligand contact to Mg(2+). Asn113 contacts anthranilate. Position 168 (Arg168) interacts with anthranilate. Asp227 and Glu228 together coordinate Mg(2+).

The protein belongs to the anthranilate phosphoribosyltransferase family. Homodimer. The cofactor is Mg(2+).

It carries out the reaction N-(5-phospho-beta-D-ribosyl)anthranilate + diphosphate = 5-phospho-alpha-D-ribose 1-diphosphate + anthranilate. It participates in amino-acid biosynthesis; L-tryptophan biosynthesis; L-tryptophan from chorismate: step 2/5. Functionally, catalyzes the transfer of the phosphoribosyl group of 5-phosphorylribose-1-pyrophosphate (PRPP) to anthranilate to yield N-(5'-phosphoribosyl)-anthranilate (PRA). This is Anthranilate phosphoribosyltransferase from Acinetobacter baumannii (strain ATCC 17978 / DSM 105126 / CIP 53.77 / LMG 1025 / NCDC KC755 / 5377).